The chain runs to 495 residues: Cobyric acid synthase (495 aa).

Positions 249 to 442 constitute a GATase cobBQ-type domain; that stretch reads KFIVKVPVVT…LHGVFDEPEA (194 aa). Residue Cys330 is the Nucleophile of the active site. His434 is an active-site residue.

The protein belongs to the CobB/CobQ family. CobQ subfamily.

It participates in cofactor biosynthesis; adenosylcobalamin biosynthesis. Catalyzes amidations at positions B, D, E, and G on adenosylcobyrinic A,C-diamide. NH(2) groups are provided by glutamine, and one molecule of ATP is hydrogenolyzed for each amidation. This Aliivibrio fischeri (strain ATCC 700601 / ES114) (Vibrio fischeri) protein is Cobyric acid synthase.